The primary structure comprises 230 residues: Sugar fermentation stimulation protein homolog (230 aa).

It belongs to the SfsA family.

This chain is Sugar fermentation stimulation protein homolog, found in Pelobacter propionicus (strain DSM 2379 / NBRC 103807 / OttBd1).